The sequence spans 208 residues: MTDMLTGTRRARVERKTKESDIVVDLDLDGTGIVDIRTGVPFFDHMLTSLGSHASFDLTVHATGDIEIEGHHTVEDTAIVLGQALGQALGDKKGIRRFGDAFIPMDETLAHAAVDVSGRPYFVHTGEPDYMVEFTIAGSSAPYHTVINRHVFESLAFNARIALHVRTIYGRDPHHITEAQYKAVARALRQAVELDPRVTGVPSTKGSL.

Belongs to the imidazoleglycerol-phosphate dehydratase family.

It is found in the cytoplasm. The enzyme catalyses D-erythro-1-(imidazol-4-yl)glycerol 3-phosphate = 3-(imidazol-4-yl)-2-oxopropyl phosphate + H2O. It participates in amino-acid biosynthesis; L-histidine biosynthesis; L-histidine from 5-phospho-alpha-D-ribose 1-diphosphate: step 6/9. In Mycobacterium sp. (strain JLS), this protein is Imidazoleglycerol-phosphate dehydratase.